The chain runs to 191 residues: Adenine phosphoribosyltransferase 5 (191 aa).

This sequence belongs to the purine/pyrimidine phosphoribosyltransferase family. Homodimer.

The protein resides in the cytoplasm. It catalyses the reaction AMP + diphosphate = 5-phospho-alpha-D-ribose 1-diphosphate + adenine. It participates in purine metabolism; AMP biosynthesis via salvage pathway; AMP from adenine: step 1/1. Functionally, catalyzes a salvage reaction resulting in the formation of AMP, that is energically less costly than de novo synthesis. May contribute to the recycling of adenine into adenylate nucleotides and the inactivation of cytokinins by phosphoribosylation. Possesses low activity toward adenine, but can efficiently convert cytokinins from free bases (active form) to the corresponding nucleotides (inactive form). This is Adenine phosphoribosyltransferase 5 (APT5) from Arabidopsis thaliana (Mouse-ear cress).